We begin with the raw amino-acid sequence, 144 residues long: RNA-binding protein 1 (144 aa).

An RRM domain is found at 11–84; the sequence is CKVYVGNLGS…TRIRVEMSSG (74 aa). Residues 78 to 115 are disordered; it reads RVEMSSGRSRDRRRGEGGSSGRSGSGRYRITPSARTTS.

It belongs to the splicing factor SR family. Interacts with x16 (via Arg/Ser-rich region). Extensively phosphorylated on serine residues in the RS domain. In terms of processing, the tandem heptapeptide repeats in the C-terminal domain (CTD) can be highly phosphorylated. The phosphorylation activates Pol II. Phosphorylation occurs at residues 'Ser-2', 'Ser-5' and 'Ser-7' of the heptapeptide repeat and is mediated by P-TEFb. Dephosphorylated by the INTAC complex when transcripts are unfavorably configured for transcriptional elongation, leading to premature transcription termination: dephosphorylation is mediated by the mts/PP2A component of the INTAC complex. In terms of tissue distribution, ubiquitous.

The protein resides in the nucleus. Its function is as follows. Contributes to the activation of female-specific DSX splicing in vivo by recognizing the RBP1 target sequences within the purine-rich polypyrimidine tract of the female-specific 3' splice site. This chain is RNA-binding protein 1 (Rbp1), found in Drosophila melanogaster (Fruit fly).